The primary structure comprises 120 residues: Hydrogenase maturation factor HypA (120 aa).

H2 is a Ni(2+) binding site. C73, H76, C89, and C92 together coordinate Zn(2+).

It belongs to the HypA/HybF family.

Involved in the maturation of [NiFe] hydrogenases. Required for nickel insertion into the metal center of the hydrogenase. The chain is Hydrogenase maturation factor HypA from Deinococcus radiodurans (strain ATCC 13939 / DSM 20539 / JCM 16871 / CCUG 27074 / LMG 4051 / NBRC 15346 / NCIMB 9279 / VKM B-1422 / R1).